The primary structure comprises 181 residues: ATP synthase subunit delta (181 aa).

The protein belongs to the ATPase delta chain family. F-type ATPases have 2 components, F(1) - the catalytic core - and F(0) - the membrane proton channel. F(1) has five subunits: alpha(3), beta(3), gamma(1), delta(1), epsilon(1). F(0) has three main subunits: a(1), b(2) and c(10-14). The alpha and beta chains form an alternating ring which encloses part of the gamma chain. F(1) is attached to F(0) by a central stalk formed by the gamma and epsilon chains, while a peripheral stalk is formed by the delta and b chains.

It localises to the cell inner membrane. Functionally, f(1)F(0) ATP synthase produces ATP from ADP in the presence of a proton or sodium gradient. F-type ATPases consist of two structural domains, F(1) containing the extramembraneous catalytic core and F(0) containing the membrane proton channel, linked together by a central stalk and a peripheral stalk. During catalysis, ATP synthesis in the catalytic domain of F(1) is coupled via a rotary mechanism of the central stalk subunits to proton translocation. Its function is as follows. This protein is part of the stalk that links CF(0) to CF(1). It either transmits conformational changes from CF(0) to CF(1) or is implicated in proton conduction. The protein is ATP synthase subunit delta of Chlorobium luteolum (strain DSM 273 / BCRC 81028 / 2530) (Pelodictyon luteolum).